We begin with the raw amino-acid sequence, 415 residues long: Gamma-glutamyl phosphate reductase (415 aa).

This sequence belongs to the gamma-glutamyl phosphate reductase family.

It is found in the cytoplasm. It catalyses the reaction L-glutamate 5-semialdehyde + phosphate + NADP(+) = L-glutamyl 5-phosphate + NADPH + H(+). The protein operates within amino-acid biosynthesis; L-proline biosynthesis; L-glutamate 5-semialdehyde from L-glutamate: step 2/2. Its function is as follows. Catalyzes the NADPH-dependent reduction of L-glutamate 5-phosphate into L-glutamate 5-semialdehyde and phosphate. The product spontaneously undergoes cyclization to form 1-pyrroline-5-carboxylate. The sequence is that of Gamma-glutamyl phosphate reductase from Desulforamulus reducens (strain ATCC BAA-1160 / DSM 100696 / MI-1) (Desulfotomaculum reducens).